The primary structure comprises 201 residues: MSRYRGPRVRISRRLGDLPGLSRKAIKRPYPPGEHGQKPRKPSEYAVRLEEKQKLRFNYGLSEKQLFKYVKAAKKLQGSTGQILLQLLEMRLDNTIFRLGMAPTIPAARQLVNHGHICINGKVVSICSYQCKPGELITVKPQESSKQLVESYLAFPGLANIPSHLELNKSNLSGKINGVIDREWVALQLNELLVVEYYSRK.

The disordered stretch occupies residues arginine 13–serine 43. The 65-residue stretch at methionine 90–alanine 154 folds into the S4 RNA-binding domain.

Belongs to the universal ribosomal protein uS4 family. In terms of assembly, part of the 30S ribosomal subunit. Contacts protein S5. The interaction surface between S4 and S5 is involved in control of translational fidelity.

It is found in the plastid. The protein localises to the chloroplast. Functionally, one of the primary rRNA binding proteins, it binds directly to 16S rRNA where it nucleates assembly of the body of the 30S subunit. Its function is as follows. With S5 and S12 plays an important role in translational accuracy. The chain is Small ribosomal subunit protein uS4c (rps4) from Porphyra purpurea (Red seaweed).